The following is a 391-amino-acid chain: Large envelope protein (391 aa).

Residue Met-1 is modified to N-acetylmethionine. Gly-2 is lipidated: N-myristoyl glycine; by host. Positions 2-108 are pre-S1; sequence GLNQSTFNPL…PPLRDTHPQA (107 aa). Residues 2–163 form a pre-S region; that stretch reads GLNQSTFNPL…FSTTGVPVST (162 aa). Residues 2 to 170 lie on the Virion surface; in external conformation side of the membrane; the sequence is GLNQSTFNPL…VSTMDITSSG (169 aa). At 2–242 the chain is on the intravirion; in internal conformation side; it reads GLNQSTFNPL…PGYRWMCLRR (241 aa). The interval 73–107 is disordered; the sequence is LSVTVPDTPPPPSTNRDKGRKPTPATPPLRDTHPQ. A pre-S2 region spans residues 109–163; the sequence is MTWNTSSFQSYLQNPKVRGLYFPAGGSTSSIVNPVPTTASTTSSSFSTTGVPVST. The chain crosses the membrane as a helical span at residues 171–191; that stretch reads FLGPLLALQAVFFLLTKILTM. The Intravirion; in external conformation portion of the chain corresponds to 192 to 242; that stretch reads PQSLDSLWTSLNFLGGTPACPGLNSQSPTSSHSPTCCPPTCPGYRWMCLRR. The chain crosses the membrane as a helical span at residues 243–263; that stretch reads SIIFLFILLLCLIFLLVLLDY. Residues 264–339 lie on the Virion surface side of the membrane; it reads QGMLPVCPLL…WALARFSWLN (76 aa). N-linked (GlcNAc...) asparagine; by host glycosylation occurs at Asn-311. Residues 340-360 form a helical membrane-spanning segment; it reads SLLPFVQWFAGLSPTVWLLVI. Residues 361 to 366 lie on the Intravirion side of the membrane; it reads WMMWFW. Residues 367-389 form a helical membrane-spanning segment; that stretch reads GPSLFSILSPFLPLLPLFFWLWA. Over 390–391 the chain is Virion surface; sequence YI.

Belongs to the orthohepadnavirus major surface antigen family. As to quaternary structure, in its internal form (Li-HBsAg), interacts with the capsid protein and with the isoform S. Interacts with host chaperone CANX. In terms of assembly, associates with host chaperone CANX through its pre-S2 N glycan; this association may be essential for isoform M proper secretion. Interacts with isoform L. Interacts with the antigens of satellite virus HDV (HDVAgs); this interaction is required for encapsidation of HDV genomic RNA. In terms of processing, isoform M is N-terminally acetylated by host at a ratio of 90%, and N-glycosylated by host at the pre-S2 region. Post-translationally, myristoylated.

The protein localises to the virion membrane. In terms of biological role, the large envelope protein exists in two topological conformations, one which is termed 'external' or Le-HBsAg and the other 'internal' or Li-HBsAg. In its external conformation the protein attaches the virus to cell receptors and thereby initiating infection. This interaction determines the species specificity and liver tropism. This attachment induces virion internalization predominantly through caveolin-mediated endocytosis. The large envelope protein also assures fusion between virion membrane and endosomal membrane. In its internal conformation the protein plays a role in virion morphogenesis and mediates the contact with the nucleocapsid like a matrix protein. Functionally, the middle envelope protein plays an important role in the budding of the virion. It is involved in the induction of budding in a nucleocapsid independent way. In this process the majority of envelope proteins bud to form subviral lipoprotein particles of 22 nm of diameter that do not contain a nucleocapsid. The polypeptide is Large envelope protein (Woolly monkey hepatitis B virus (isolate Louisville) (WMHBV)).